A 377-amino-acid polypeptide reads, in one-letter code: Iris (377 aa).

2 N-linked (GlcNAc...) asparagine glycosylation sites follow: asparagine 11 and asparagine 226.

The protein belongs to the serpin family. In terms of tissue distribution, female saliva (at protein level). Female salivary gland (at protein level).

The protein localises to the secreted. Serine protease inhibitor with anticoagulant and immunosuppressive properties that can modulate blood feeding of ticks on vertebrate species. Strongly inhibits human leukocyte elastase (ELANE) and porcine pancreatic elastase. Moderately inhibits human tPA/tissue-type plasminogen activator (PLAT), coagulation factor Xa (F10), thrombin (F2) and trypsin. Does not inhibit human plasmin (PLG). Inhibits platelet aggregation. Inhibits the intrinsic pathway of blood coagulation in the host. Inhibits fibrinolysis in the host. Inhibits proliferation of mouse splenocytes. Decreases the number of IFN-gamma (IFNG)-producing human peripheral blood mononuclear cells (PBMCs) after stimulation with phytohemagglutinin A (PHA). Increases the number of IL10-producing human PBMCs after stimulation with lipopolysaccharides (LPS) with no significant effect on IL10 production. Inhibits production of IFNG, IL6, TNF-alpha (TNF) and CXCL8 by human PBMCs. Binds to monocyte/macrophage subpopulation of the host PBMCs. Increases both survival rate and survival time in mice with LPS-induced endotoxemic shock. This chain is Iris, found in Ixodes ricinus (Common tick).